A 176-amino-acid chain; its full sequence is MDLPGPIHEILMLFGGFVLLLGGLGVVLLTNPIYSAFSLGLVLVCISLFYFLLNSYFVAVAQLLIYVGAINVLIIFAVMFVNGSEWSKDKNYWTIGDGFTSLVCITIVFSLMTTIPDTSWYGILWTTRSNQIVEQGLINNVQQIGIHLATDFYLPFELISIILLVSLIGAITMARQ.

5 helical membrane-spanning segments follow: residues 10–30 (ILML…VLLT), 33–53 (IYSA…YFLL), 60–80 (VAQL…AVMF), 95–115 (IGDG…MTTI), and 152–172 (FYLP…GAIT).

The protein belongs to the complex I subunit 6 family. In terms of assembly, NDH is composed of at least 16 different subunits, 5 of which are encoded in the nucleus.

The protein resides in the plastid. Its subcellular location is the chloroplast thylakoid membrane. The catalysed reaction is a plastoquinone + NADH + (n+1) H(+)(in) = a plastoquinol + NAD(+) + n H(+)(out). It carries out the reaction a plastoquinone + NADPH + (n+1) H(+)(in) = a plastoquinol + NADP(+) + n H(+)(out). In terms of biological role, NDH shuttles electrons from NAD(P)H:plastoquinone, via FMN and iron-sulfur (Fe-S) centers, to quinones in the photosynthetic chain and possibly in a chloroplast respiratory chain. The immediate electron acceptor for the enzyme in this species is believed to be plastoquinone. Couples the redox reaction to proton translocation, and thus conserves the redox energy in a proton gradient. The protein is NAD(P)H-quinone oxidoreductase subunit 6, chloroplastic (ndhG) of Triticum aestivum (Wheat).